The following is a 282-amino-acid chain: Short-chain dehydrogenase/reductase prx7 (282 aa).

Residues Asn-23, Asn-70, Tyr-150, Lys-154, Val-183, and Thr-185 each coordinate NADP(+). Tyr-150 acts as the Proton acceptor in catalysis. Residue Lys-154 is the Lowers pKa of active site Tyr of the active site.

The protein belongs to the short-chain dehydrogenases/reductases (SDR) family.

It functions in the pathway sesquiterpene biosynthesis. Functionally, short-chain dehydrogenase/reductase; part of the gene cluster that mediates the biosynthesis of PR-toxin, a bicyclic sesquiterpene belonging to the eremophilane class and acting as a mycotoxin. The first step of the pathway is catalyzed by the aristolochene synthase which performs the cyclization of trans,trans-farnesyl diphosphate (FPP) to the bicyclic sesquiterpene aristolochene. Following the formation of aristolochene, the non-oxygenated aristolochene is converted to the trioxygenated intermediate eremofortin B, via 7-epi-neopetasone. This conversion appears to involve three enzymes, a hydroxysterol oxidase-like enzyme, the quinone-oxidase prx3 that forms the quinone-type-structure in the bicyclic nucleus of aristolochene with the C8-oxo group and the C-3 hydroxyl group, and the P450 monooxygenase prx9 that introduces the epoxide at the double bond between carbons 1 and 2. No monoxy or dioxy-intermediates have been reported to be released to the broth, so these three early oxidative reactions may be coupled together. Eremofortin B is further oxidized by another P450 monooxygenase, that introduces a second epoxide between carbons 7 and 11 prior to acetylation to eremofortin A by the acetyltransferase prx11. The second epoxidation may be performed by a second P450 monooxygenase. After the acetylation step, eremofortin A is converted to eremofortin C and then to PR-toxin. First the conversion of eremofortin A to eremofortin C proceeds by oxidation of the side chain of the molecule at C-12 and is catalyzed by the short-chain oxidoreductase prx1. The cytochrome P450 monooxygenase prx8 also plays a role in this step. The primary alcohol formed at C-12 is finally oxidized by the short-chain alcohol dehydrogenase prx4 that forms PR-toxin. This is Short-chain dehydrogenase/reductase prx7 from Penicillium rubens (strain ATCC 28089 / DSM 1075 / NRRL 1951 / Wisconsin 54-1255) (Penicillium chrysogenum).